The following is a 428-amino-acid chain: Phosphomethylpyrimidine synthase (428 aa).

Substrate-binding positions include N66, M95, Y124, H163, 185–187 (SRG), 226–229 (DGLR), and E265. H269 provides a ligand contact to Zn(2+). A substrate-binding site is contributed by Y292. H333 lines the Zn(2+) pocket. [4Fe-4S] cluster contacts are provided by C407, C410, and C414.

The protein belongs to the ThiC family. It depends on [4Fe-4S] cluster as a cofactor.

The enzyme catalyses 5-amino-1-(5-phospho-beta-D-ribosyl)imidazole + S-adenosyl-L-methionine = 4-amino-2-methyl-5-(phosphooxymethyl)pyrimidine + CO + 5'-deoxyadenosine + formate + L-methionine + 3 H(+). Its pathway is cofactor biosynthesis; thiamine diphosphate biosynthesis. Its function is as follows. Catalyzes the synthesis of the hydroxymethylpyrimidine phosphate (HMP-P) moiety of thiamine from aminoimidazole ribotide (AIR) in a radical S-adenosyl-L-methionine (SAM)-dependent reaction. This chain is Phosphomethylpyrimidine synthase, found in Thermococcus kodakarensis (strain ATCC BAA-918 / JCM 12380 / KOD1) (Pyrococcus kodakaraensis (strain KOD1)).